The chain runs to 187 residues: Troponin I, slow skeletal muscle (187 aa).

Residue proline 2 is modified to N-acetylproline. An involved in binding TNC region spans residues proline 2–arginine 48. Serine 58 is subject to Phosphoserine. The segment at leucine 97 to valine 118 is involved in binding TNC and actin.

It belongs to the troponin I family. Binds to actin and tropomyosin.

Troponin I is the inhibitory subunit of troponin, the thin filament regulatory complex which confers calcium-sensitivity to striated muscle actomyosin ATPase activity. In Rattus norvegicus (Rat), this protein is Troponin I, slow skeletal muscle (Tnni1).